Consider the following 738-residue polypeptide: 1,4-alpha-glucan branching enzyme GlgB (738 aa).

The Nucleophile role is filled by Asp399. Catalysis depends on Glu452, which acts as the Proton donor.

It belongs to the glycosyl hydrolase 13 family. GlgB subfamily. In terms of assembly, monomer.

It carries out the reaction Transfers a segment of a (1-&gt;4)-alpha-D-glucan chain to a primary hydroxy group in a similar glucan chain.. The protein operates within glycan biosynthesis; glycogen biosynthesis. Functionally, catalyzes the formation of the alpha-1,6-glucosidic linkages in glycogen by scission of a 1,4-alpha-linked oligosaccharide from growing alpha-1,4-glucan chains and the subsequent attachment of the oligosaccharide to the alpha-1,6 position. The chain is 1,4-alpha-glucan branching enzyme GlgB from Chlamydia trachomatis serovar A (strain ATCC VR-571B / DSM 19440 / HAR-13).